A 1007-amino-acid chain; its full sequence is Exportin-7 (1007 aa).

This sequence belongs to the exportin family.

Its subcellular location is the nucleus. It localises to the cytoplasm. The protein resides in the nuclear pore complex. Mediates the nuclear export of proteins (cargos) with broad substrate specificity. In Dictyostelium discoideum (Social amoeba), this protein is Exportin-7 (xpo7).